The following is a 581-amino-acid chain: Proline--tRNA ligase (581 aa).

It belongs to the class-II aminoacyl-tRNA synthetase family. ProS type 1 subfamily. In terms of assembly, homodimer.

Its subcellular location is the cytoplasm. The catalysed reaction is tRNA(Pro) + L-proline + ATP = L-prolyl-tRNA(Pro) + AMP + diphosphate. Functionally, catalyzes the attachment of proline to tRNA(Pro) in a two-step reaction: proline is first activated by ATP to form Pro-AMP and then transferred to the acceptor end of tRNA(Pro). As ProRS can inadvertently accommodate and process non-cognate amino acids such as alanine and cysteine, to avoid such errors it has two additional distinct editing activities against alanine. One activity is designated as 'pretransfer' editing and involves the tRNA(Pro)-independent hydrolysis of activated Ala-AMP. The other activity is designated 'posttransfer' editing and involves deacylation of mischarged Ala-tRNA(Pro). The misacylated Cys-tRNA(Pro) is not edited by ProRS. The polypeptide is Proline--tRNA ligase (Rhodococcus erythropolis (strain PR4 / NBRC 100887)).